The sequence spans 1372 residues: DNA-directed RNA polymerase subunit beta' (1372 aa).

Zn(2+) is bound by residues C69, C71, C84, and C87. Residues D460, D462, and D464 each coordinate Mg(2+). The Zn(2+) site is built by C808, C882, C889, and C892.

The protein belongs to the RNA polymerase beta' chain family. The RNAP catalytic core consists of 2 alpha, 1 beta, 1 beta' and 1 omega subunit. When a sigma factor is associated with the core the holoenzyme is formed, which can initiate transcription. It depends on Mg(2+) as a cofactor. Zn(2+) is required as a cofactor.

It catalyses the reaction RNA(n) + a ribonucleoside 5'-triphosphate = RNA(n+1) + diphosphate. In terms of biological role, DNA-dependent RNA polymerase catalyzes the transcription of DNA into RNA using the four ribonucleoside triphosphates as substrates. This chain is DNA-directed RNA polymerase subunit beta', found in Rickettsia akari (strain Hartford).